A 208-amino-acid polypeptide reads, in one-letter code: V-type ATP synthase subunit E (208 aa).

This sequence belongs to the V-ATPase E subunit family.

In terms of biological role, produces ATP from ADP in the presence of a proton gradient across the membrane. This Chlamydia trachomatis serovar A (strain ATCC VR-571B / DSM 19440 / HAR-13) protein is V-type ATP synthase subunit E.